Here is a 476-residue protein sequence, read N- to C-terminus: Serine carboxypeptidase 2 (476 aa).

The signal sequence occupies residues 1–34 (MRTTTRRLPPAPAAAAVLLAALTCLLLRPAAVAA). 3 disulfide bridges follow: cysteine 97–cysteine 353, cysteine 254–cysteine 266, and cysteine 290–cysteine 320. Asparagine 148 and asparagine 159 each carry an N-linked (GlcNAc...) asparagine glycan. The active site involves serine 190. N-linked (GlcNAc...) asparagine glycosylation occurs at asparagine 291. Positions 295–313 (SSSSSSLSRRRTRGRYPWL) are cleaved as a propeptide — linker peptide. Threonine 314 bears the Blocked amino end (Thr) mark. N-linked (GlcNAc...) asparagine glycans are attached at residues asparagine 341 and asparagine 347. Asparagine 352 carries N-linked (GlcNAc...) asparagine; partial glycosylation. O-linked (GalNAc...) threonine; in variant 351-AT-352 glycosylation is present at asparagine 352. Catalysis depends on residues aspartate 390 and histidine 443. Asparagine 472 is a glycosylation site (N-linked (GlcNAc...) asparagine).

Belongs to the peptidase S10 family. Carboxypeptidase II is a dimer, where each monomer is composed of two chains linked by a disulfide bond.

The protein resides in the secreted. It carries out the reaction Preferential release of a C-terminal arginine or lysine residue.. Its function is as follows. May be involved in the degradation of small peptides (2-5 residues) or in the degradation of storage proteins in the embryo. This is Serine carboxypeptidase 2 (CBP2) from Hordeum vulgare (Barley).